The sequence spans 335 residues: N-acetyl-gamma-glutamyl-phosphate reductase (335 aa).

The active site involves cysteine 156.

Belongs to the NAGSA dehydrogenase family. Type 1 subfamily.

It localises to the cytoplasm. The enzyme catalyses N-acetyl-L-glutamate 5-semialdehyde + phosphate + NADP(+) = N-acetyl-L-glutamyl 5-phosphate + NADPH + H(+). It participates in amino-acid biosynthesis; L-arginine biosynthesis; N(2)-acetyl-L-ornithine from L-glutamate: step 3/4. Its function is as follows. Catalyzes the NADPH-dependent reduction of N-acetyl-5-glutamyl phosphate to yield N-acetyl-L-glutamate 5-semialdehyde. This Aeromonas hydrophila subsp. hydrophila (strain ATCC 7966 / DSM 30187 / BCRC 13018 / CCUG 14551 / JCM 1027 / KCTC 2358 / NCIMB 9240 / NCTC 8049) protein is N-acetyl-gamma-glutamyl-phosphate reductase.